Consider the following 1070-residue polypeptide: DNA-directed RNA polymerase subunit beta (1070 aa).

Belongs to the RNA polymerase beta chain family. As to quaternary structure, in plastids the minimal PEP RNA polymerase catalytic core is composed of four subunits: alpha, beta, beta', and beta''. When a (nuclear-encoded) sigma factor is associated with the core the holoenzyme is formed, which can initiate transcription.

The protein localises to the plastid. It localises to the chloroplast. It carries out the reaction RNA(n) + a ribonucleoside 5'-triphosphate = RNA(n+1) + diphosphate. Its function is as follows. DNA-dependent RNA polymerase catalyzes the transcription of DNA into RNA using the four ribonucleoside triphosphates as substrates. This is DNA-directed RNA polymerase subunit beta from Liriodendron tulipifera (Tuliptree).